Here is a 144-residue protein sequence, read N- to C-terminus: Granulocyte-macrophage colony-stimulating factor (144 aa).

The signal sequence occupies residues 1–17; it reads MWLQNLLFLGTVVCSIS. Residue Ser22 is glycosylated (O-linked (GalNAc...) serine). An O-linked (GalNAc...) threonine glycan is attached at Thr27. The N-linked (GlcNAc...) asparagine glycan is linked to Asn44. Disulfide bonds link Cys71-Cys113 and Cys105-Cys138.

This sequence belongs to the GM-CSF family. Monomer. The signaling GM-CSF receptor complex is a dodecamer of two head-to-head hexamers of two alpha, two beta, and two ligand subunits.

The protein localises to the secreted. Cytokine that stimulates the growth and differentiation of hematopoietic precursor cells from various lineages, including granulocytes, macrophages, eosinophils and erythrocytes. The chain is Granulocyte-macrophage colony-stimulating factor (CSF2) from Canis lupus familiaris (Dog).